Consider the following 158-residue polypeptide: Cathelicidin-6 (158 aa).

Positions 1–29 (METQRASLSLGRWSLWLLLLGLALPSASA) are cleaved as a signal peptide. The propeptide occupies 30-131 (QALSYREAVL…NVTCEELQSV (102 aa)). 2 disulfides stabilise this stretch: cysteine 86–cysteine 97 and cysteine 108–cysteine 125.

Belongs to the cathelicidin family.

The protein resides in the secreted. Exerts a potent antimicrobial activity against Gram-negative and Gram-positive bacteria, including methicillin-resistant Staphylococcus aureus, and fungi. The polypeptide is Cathelicidin-6 (CATHL6) (Bos taurus (Bovine)).